A 120-amino-acid chain; its full sequence is Small ribosomal subunit protein uS10 (120 aa).

Phosphoserine occurs at positions 16 and 18.

This sequence belongs to the universal ribosomal protein uS10 family. In terms of tissue distribution, expressed ubiquitously in embryos, highest expression is in the midgut.

The sequence is that of Small ribosomal subunit protein uS10 (RpS20) from Drosophila melanogaster (Fruit fly).